Consider the following 446-residue polypeptide: MLLLPSRGKLYVVGIGPGKEELMTLKAKRAIEEADYIVGYQTYVDRISHLIEGKKVVTTPMRKELDRVKIALELAKEHVVALISGGDPSIYGILPLVIEYAVEKKVDVEIEAIPGVTAASAASSLLGSAISGDFAVVSLSDLLVPWSVVEKRLLYALSGDFVVAIYNPSSRRRKENFRKAMEIVRRFRGDAWVGVVRNAGREGQQVEIRRVSEVDEVDMNTILIVGNSETKVVDGKMFTPRGYSNKYNIGEKRRAERMGASTKGGMEVARRSEEILRSFYPEEGLRGDIIRRCIATTGDVTIKDVIRFVGDTEEGVRALRDGCRIIADVHMVRAGLRRDAIVAVDFARGDDTRTASGIRNLAEMIEGSLVAIGNSPSAAFALCEVAEKHPPRFIVATPVGFVNAAESKEMVRKLPVPSVTTEGPRGGSGICAAIVNCLIEHADRPD.

The tract at residues 1 to 246 is cobalt-factor III C(17)-methyltransferase; the sequence is MLLLPSRGKL…MFTPRGYSNK (246 aa). The tract at residues 247–446 is cobalt-precorrin-8 methylmutase; that stretch reads YNIGEKRRAE…CLIEHADRPD (200 aa).

In the N-terminal section; belongs to the precorrin methyltransferase family. The protein in the C-terminal section; belongs to the CobH family.

It carries out the reaction Co(II)-factor III + S-adenosyl-L-methionine + H(+) = Co(II)-factor IV + S-adenosyl-L-homocysteine. The catalysed reaction is Co-precorrin-8X = cob(II)yrinate. It participates in cofactor biosynthesis; adenosylcobalamin biosynthesis; cob(II)yrinate a,c-diamide from sirohydrochlorin (anaerobic route): step 3/10. It functions in the pathway cofactor biosynthesis; adenosylcobalamin biosynthesis; cob(II)yrinate a,c-diamide from sirohydrochlorin (anaerobic route): step 9/10. Bifunctional enzyme with a methyltransferase domain that catalyzes the ring contraction and methylation of C-17 in cobalt-factor III to form cobalt-factor IV, and an isomerase domain that catalyzes the conversion of cobalt-precorrin-8 to cobyrinate. This chain is Cobalamin biosynthesis protein CbiHC (cbiHC), found in Archaeoglobus fulgidus (strain ATCC 49558 / DSM 4304 / JCM 9628 / NBRC 100126 / VC-16).